We begin with the raw amino-acid sequence, 440 residues long: Thymidine phosphorylase (440 aa).

It belongs to the thymidine/pyrimidine-nucleoside phosphorylase family. Homodimer.

The enzyme catalyses thymidine + phosphate = 2-deoxy-alpha-D-ribose 1-phosphate + thymine. The protein operates within pyrimidine metabolism; dTMP biosynthesis via salvage pathway; dTMP from thymine: step 1/2. The enzymes which catalyze the reversible phosphorolysis of pyrimidine nucleosides are involved in the degradation of these compounds and in their utilization as carbon and energy sources, or in the rescue of pyrimidine bases for nucleotide synthesis. The protein is Thymidine phosphorylase of Klebsiella pneumoniae subsp. pneumoniae (strain ATCC 700721 / MGH 78578).